A 210-amino-acid polypeptide reads, in one-letter code: Synaptosomal-associated protein 25 (210 aa).

Residues 1–23 (MENSVENSMDPRSEQEEMQRCAD) are disordered. Residues 9 to 20 (MDPRSEQEEMQR) are compositionally biased toward basic and acidic residues. T-SNARE coiled-coil homology domains are found at residues 23–85 (DQIT…LSDL) and 147–209 (DARE…ATKM).

Belongs to the SNAP-25 family.

Its subcellular location is the synapse. It is found in the synaptosome. The protein resides in the cell membrane. Functionally, may play an important role in the synaptic function of specific neuronal systems. Associates with proteins involved in vesicle docking and membrane fusion. The protein is Synaptosomal-associated protein 25 (snap25) of Torpedo marmorata (Marbled electric ray).